Here is a 370-residue protein sequence, read N- to C-terminus: uncharacterized protein (370 aa).

Belongs to the metallo-dependent hydrolases superfamily.

This is an uncharacterized protein from Mycobacterium bovis (strain ATCC BAA-935 / AF2122/97).